The sequence spans 243 residues: MTEGVQNERTGYKRVMLKLGGEMFGGGAVGIDPDVVQNVARQIASVARTGAEIAVVIGGGNFFRGAQLQQRGLDRNRSDYMGMLGTVMNCLALQDFLEQEGIDCRVQTAINMAQVAEPYLPLRAKRHLEKGRVVIFGAGMGMPYFSTDTTAAQRALEIDCEVLLMAKAVDGVYDDDPRTNPDAQLFHQITPREVIEKGLKVADATAFSLCMDNKMPILVFNLLTEGNIARAVAGEQIGTLVQS.

Residue 18–21 (KLGG) participates in ATP binding. Gly-59 lines the UMP pocket. 2 residues coordinate ATP: Gly-60 and Arg-64. Residues Asp-79 and 140–147 (MGMPYFST) contribute to the UMP site. ATP is bound by residues Tyr-173 and Asp-176.

It belongs to the UMP kinase family. As to quaternary structure, homohexamer.

The protein localises to the cytoplasm. It catalyses the reaction UMP + ATP = UDP + ADP. It functions in the pathway pyrimidine metabolism; CTP biosynthesis via de novo pathway; UDP from UMP (UMPK route): step 1/1. With respect to regulation, inhibited by UTP. In terms of biological role, catalyzes the reversible phosphorylation of UMP to UDP. The polypeptide is Uridylate kinase (Corynebacterium diphtheriae (strain ATCC 700971 / NCTC 13129 / Biotype gravis)).